A 705-amino-acid polypeptide reads, in one-letter code: Frizzled-4 (705 aa).

A signal peptide spans 1 to 22 (MKPTCILCLLVVILLHPRISKS). The segment covering 21–37 (KSSTSGNPSASSSSSSP) has biased composition (low complexity). A disordered region spans residues 21–40 (KSSTSGNPSASSSSSSPPEI). Residues 23–233 (STSGNPSASS…FTPAEKHLAE (211 aa)) lie on the Extracellular side of the membrane. One can recognise an FZ domain in the interval 41 to 163 (PAFRQCETIR…NNHETMCMEG (123 aa)). Cystine bridges form between C46–C107, C54–C100, C91–C130, C119–C160, and C123–C147. Residue N60 is glycosylated (N-linked (GlcNAc...) asparagine). Residues 234-254 (IWVSTWAYAALGLALVATVCL) traverse the membrane as a helical segment. Over 255–270 (LASDGSRLASAKWSRL) the chain is Cytoplasmic. A helical transmembrane segment spans residues 271–291 (LSPLIWCHNMVTLGWAVRFMV). The Extracellular portion of the chain corresponds to 292 to 322 (GRTGTACGTDPQAPNESLLTVDGLSNASCAS). Residues N306 and N317 are each glycosylated (N-linked (GlcNAc...) asparagine). Residues 323-343 (VFLMRYYFGMAACAWWAVLCL) traverse the membrane as a helical segment. The Cytoplasmic portion of the chain corresponds to 344–386 (GWHRDIRRHSPDSKGHVVIPSNFGGSPAKRNSAKTAQQDLTQN). A helical membrane pass occupies residues 387-407 (NFVCFVAWGLPAFQTSAVIVA). At 408–430 (RFVDADELLGACFVGNQSDKALQ) the chain is on the extracellular side. N423 is a glycosylation site (N-linked (GlcNAc...) asparagine). Residues 431–451 (ILVATPVFCYWIFGSMNLISG) form a helical membrane-spanning segment. The Cytoplasmic portion of the chain corresponds to 452-483 (YLVHCRTKEILRNSNALSVQQQLQQLSAHSSS). A helical membrane pass occupies residues 484–504 (GIGIFLFIYGLACAMLLLAVI). The Extracellular segment spans residues 505 to 529 (YEFANIDVWLGSGDTNTPLWPFLLR). A helical transmembrane segment spans residues 530-550 (AFMELMLGICCFAWVLGPSIS). At 551–705 (TLYKRQVSNG…LQQYGNETLL (155 aa)) the chain is on the cytoplasmic side. Residues 635–681 (RSVHHQQRHSPHHHHHQQQQHHQFHPHHNHQHHSTSSHRLYYPPGSY) form a disordered region. Basic residues predominate over residues 636–670 (SVHHQQRHSPHHHHHQQQQHHQFHPHHNHQHHSTS). The PDZ-binding signature appears at 703–705 (TLL).

Belongs to the G-protein coupled receptor Fz/Smo family.

It localises to the membrane. Functionally, receptor for Wnt proteins. Most of frizzled receptors are coupled to the beta-catenin canonical signaling pathway, which leads to the activation of disheveled proteins, inhibition of GSK-3 kinase, nuclear accumulation of beta-catenin and activation of Wnt target genes. A second signaling pathway involving PKC and calcium fluxes has been seen for some family members, but it is not yet clear if it represents a distinct pathway or if it can be integrated in the canonical pathway, as PKC seems to be required for Wnt-mediated inactivation of GSK-3 kinase. Both pathways seem to involve interactions with G-proteins. May be involved in transduction and intercellular transmission of polarity information during tissue morphogenesis and/or in differentiated tissues. Required to coordinate the cytoskeletons of epidermal cells to produce a parallel array of cuticular hairs and bristles. This is Frizzled-4 (fz4) from Drosophila melanogaster (Fruit fly).